Here is a 436-residue protein sequence, read N- to C-terminus: Eukaryotic peptide chain release factor subunit 1 (436 aa).

Belongs to the eukaryotic release factor 1 family. As to quaternary structure, heterodimer of two subunits, one of which binds GTP.

Its subcellular location is the cytoplasm. Its function is as follows. Directs the termination of nascent peptide synthesis (translation) in response to the termination codons UAA and UAG. In B.musculus UGA codes for tryptophan. In Blepharisma musculus, this protein is Eukaryotic peptide chain release factor subunit 1 (eRF1).